The primary structure comprises 216 residues: MPNRKIPRATAKRLPVYYRYLNVLLNANKHRVSSTELSEAVQVDSATIRRDFSYFGELGKRGYGYDVEKLLNFFKGILKQDKLTSVALVGVGSLGSALMNYNFHQSTNLRISAAFDPKESLANTVKSGIPVYPVEDMKKQIKEQQIDAVILTVPGSESQAVTDQLVEAGVHGILNFTPVRLSVPKDVQVQNIDLTNELQTLIYFIESNKVTTDDED.

Residues 16-55 (VYYRYLNVLLNANKHRVSSTELSEAVQVDSATIRRDFSYF) constitute a DNA-binding region (H-T-H motif). 90 to 95 (GVGSLG) lines the NAD(+) pocket.

This sequence belongs to the transcriptional regulatory Rex family. Homodimer.

It localises to the cytoplasm. Modulates transcription in response to changes in cellular NADH/NAD(+) redox state. The protein is Redox-sensing transcriptional repressor Rex of Limosilactobacillus fermentum (strain NBRC 3956 / LMG 18251) (Lactobacillus fermentum).